We begin with the raw amino-acid sequence, 403 residues long: NADH-quinone oxidoreductase subunit D (403 aa).

It belongs to the complex I 49 kDa subunit family. In terms of assembly, NDH-1 is composed of 14 different subunits. Subunits NuoB, C, D, E, F, and G constitute the peripheral sector of the complex.

The protein resides in the cell inner membrane. The enzyme catalyses a quinone + NADH + 5 H(+)(in) = a quinol + NAD(+) + 4 H(+)(out). In terms of biological role, NDH-1 shuttles electrons from NADH, via FMN and iron-sulfur (Fe-S) centers, to quinones in the respiratory chain. The immediate electron acceptor for the enzyme in this species is believed to be ubiquinone. Couples the redox reaction to proton translocation (for every two electrons transferred, four hydrogen ions are translocated across the cytoplasmic membrane), and thus conserves the redox energy in a proton gradient. The protein is NADH-quinone oxidoreductase subunit D of Erythrobacter litoralis (strain HTCC2594).